The sequence spans 159 residues: S-ribosylhomocysteine lyase (159 aa).

Fe cation contacts are provided by His-53, His-57, and Cys-124.

Belongs to the LuxS family. As to quaternary structure, homodimer. It depends on Fe cation as a cofactor.

It catalyses the reaction S-(5-deoxy-D-ribos-5-yl)-L-homocysteine = (S)-4,5-dihydroxypentane-2,3-dione + L-homocysteine. Its function is as follows. Involved in the synthesis of autoinducer 2 (AI-2) which is secreted by bacteria and is used to communicate both the cell density and the metabolic potential of the environment. The regulation of gene expression in response to changes in cell density is called quorum sensing. Catalyzes the transformation of S-ribosylhomocysteine (RHC) to homocysteine (HC) and 4,5-dihydroxy-2,3-pentadione (DPD). This Porphyromonas gingivalis (strain ATCC 33277 / DSM 20709 / CIP 103683 / JCM 12257 / NCTC 11834 / 2561) protein is S-ribosylhomocysteine lyase.